We begin with the raw amino-acid sequence, 387 residues long: uncharacterized protein (387 aa).

A helical transmembrane segment spans residues 5–25 (FVLFSFPFLLLSSMLIFYQTT).

This sequence belongs to the LicD transferase family.

The protein localises to the membrane. This is an uncharacterized protein from Caenorhabditis elegans.